A 177-amino-acid chain; its full sequence is ATP synthase subunit delta (177 aa).

It belongs to the ATPase delta chain family. F-type ATPases have 2 components, F(1) - the catalytic core - and F(0) - the membrane proton channel. F(1) has five subunits: alpha(3), beta(3), gamma(1), delta(1), epsilon(1). F(0) has three main subunits: a(1), b(2) and c(10-14). The alpha and beta chains form an alternating ring which encloses part of the gamma chain. F(1) is attached to F(0) by a central stalk formed by the gamma and epsilon chains, while a peripheral stalk is formed by the delta and b chains.

Its subcellular location is the cell inner membrane. Its function is as follows. F(1)F(0) ATP synthase produces ATP from ADP in the presence of a proton or sodium gradient. F-type ATPases consist of two structural domains, F(1) containing the extramembraneous catalytic core and F(0) containing the membrane proton channel, linked together by a central stalk and a peripheral stalk. During catalysis, ATP synthesis in the catalytic domain of F(1) is coupled via a rotary mechanism of the central stalk subunits to proton translocation. In terms of biological role, this protein is part of the stalk that links CF(0) to CF(1). It either transmits conformational changes from CF(0) to CF(1) or is implicated in proton conduction. This is ATP synthase subunit delta from Shewanella denitrificans (strain OS217 / ATCC BAA-1090 / DSM 15013).